A 699-amino-acid polypeptide reads, in one-letter code: Ubiquitin-like modifier-activating enzyme ATG7 (699 aa).

Positions G370–G375 match the GXGXXG motif motif. The active-site Glycyl thioester intermediate is the C550. The interval A653–E691 is homodimerization.

The protein belongs to the ATG7 family. As to quaternary structure, homodimer. Interacts with ATG8 through a thioester bond between Cys-550 and the C-terminal Gly of ATG8 and with ATG12 through a thioester bond between Cys-550 and the C-terminal Gly of ATG12. Also interacts with ATG3.

It localises to the cytoplasm. The protein localises to the preautophagosomal structure. E1-like activating enzyme involved in the 2 ubiquitin-like systems required for cytoplasm to vacuole transport (Cvt) and autophagy. Activates ATG12 for its conjugation with ATG5 and ATG8 for its conjugation with phosphatidylethanolamine. Both systems are needed for the ATG8 association to Cvt vesicles and autophagosomes membranes. Autophagy is essential for maintenance of amino acid levels and protein synthesis under nitrogen starvation. Required for selective autophagic degradation of the nucleus (nucleophagy) as well as for mitophagy which contributes to regulate mitochondrial quantity and quality by eliminating the mitochondria to a basal level to fulfill cellular energy requirements and preventing excess ROS production. Required for normal mycelial growth and conidiogenesis. This Sordaria macrospora (strain ATCC MYA-333 / DSM 997 / K(L3346) / K-hell) protein is Ubiquitin-like modifier-activating enzyme ATG7.